The sequence spans 505 residues: Histidine ammonia-lyase (505 aa).

A cross-link (5-imidazolinone (Ala-Gly)) is located at residues 141 to 143; sequence ASG. A 2,3-didehydroalanine (Ser) modification is found at serine 142.

This sequence belongs to the PAL/histidase family. Post-translationally, contains an active site 4-methylidene-imidazol-5-one (MIO), which is formed autocatalytically by cyclization and dehydration of residues Ala-Ser-Gly.

It localises to the cytoplasm. It carries out the reaction L-histidine = trans-urocanate + NH4(+). The protein operates within amino-acid degradation; L-histidine degradation into L-glutamate; N-formimidoyl-L-glutamate from L-histidine: step 1/3. This chain is Histidine ammonia-lyase, found in Bacillus cytotoxicus (strain DSM 22905 / CIP 110041 / 391-98 / NVH 391-98).